Consider the following 193-residue polypeptide: MSNVVVIAVVLIVASLTGHVSAQMDMSPSSGPSGAPDCMANLMNMTGCLSYVTVGEGGGAAKPDKTCCPALAGLVESSPQCLCYLLSGDMAAQLGIKIDKAKALKLPGVCGVITPDPSLCSLFGIPVGAPVAMGDEGASPAYAPGSMSGAESPGGFGSGPSASRGSDAPSSAPYSLFLNLIIFPLAFAFYIFC.

Positions 1–22 are cleaved as a signal peptide; it reads MSNVVVIAVVLIVASLTGHVSA. Intrachain disulfides connect C38-C83, C48-C67, C68-C110, and C81-C120. N-linked (GlcNAc...) asparagine glycosylation is present at N44. The interval 143–164 is disordered; it reads APGSMSGAESPGGFGSGPSASR. G165 carries GPI-anchor amidated glycine lipidation. Residues 166 to 193 constitute a propeptide, removed in mature form; that stretch reads SDAPSSAPYSLFLNLIIFPLAFAFYIFC.

The protein belongs to the plant LTP family. In terms of processing, O-glycosylated on hydroxyprolines; noncontiguous hydroxylproline residues are glycosylated with arabinogalactan. As to expression, up-regulated in the epidermis of top stems. Expressed in roots, cotyledons, seedlings, leaves, stems, buds, flower and silique walls. Preferentially expressed in the shoot apical meristem and the root meristem. Also detected in expanding leaves and petals, developing flowers, and elongating pistils, stamens and siliques.

Its subcellular location is the cell membrane. In terms of biological role, lipid transfer protein that, together with LTPG1, binds to lipids and functions as a component of the cuticular lipid export machinery that performs extensive export of intracellular lipids (e.g. C29 alkane) from epidermal cells to the surface to build the cuticular wax layer and silique walls. Contributes to pre-invasive defense against some non-host powdery mildew pathogens by preventing the penetration of the epidermal cell wall by the fungal agents (e.g. Blumeria graminis f. sp. hordei (Bgh)). Involved in seed and ovule maturation and development, probably by regulating the fatty acids homeostasis during suberin and sporopollenin biosynthesis or deposition. This is Non-specific lipid transfer protein GPI-anchored 2 from Arabidopsis thaliana (Mouse-ear cress).